A 77-amino-acid polypeptide reads, in one-letter code: Structural DNA-binding protein p10 (77 aa).

Positions 1–12 (MPTKAGTKSTAN) are enriched in polar residues. Positions 1-38 (MPTKAGTKSTANKKTTKGPSKSGSAKGHTGKTHATALH) are disordered. Residues 17–27 (KGPSKSGSAKG) show a composition bias toward low complexity.

It belongs to the asfivirus P10 family.

The protein resides in the virion. Functionally, may play a role in genome packaging through direct interaction with viral DNA. Binds to ssDNA and dsDNA with the same apparent affinity in vitro. The chain is Structural DNA-binding protein p10 from Ornithodoros (relapsing fever ticks).